The primary structure comprises 131 residues: MSWQTYVDDHLMCDIDGHRLTAAAIIGHDGSVWAQSSSFPQFKSDEVAAIMKDFDEPGSLAPTGLHLGSTKYMVIQGEPGAVIRGKKGSGGITVKKTSQALIIGIYDEPLTPGQCNMIVERLGDYLLEQGM.

Belongs to the profilin family. Occurs in many kinds of cells as a complex with monomeric actin in a 1:1 ratio.

The protein resides in the cytoplasm. The protein localises to the cytoskeleton. In terms of biological role, binds to actin and affects the structure of the cytoskeleton. At high concentrations, profilin prevents the polymerization of actin, whereas it enhances it at low concentrations. By binding to PIP2, it inhibits the formation of IP3 and DG. The sequence is that of Profilin-4 from Hevea brasiliensis (Para rubber tree).